A 932-amino-acid chain; its full sequence is RNA-binding protein 12 (932 aa).

Residues 97-116 form a disordered region; it reads IPPANASRSGPPPSSGMSGR. A compositionally biased stretch (low complexity) spans 98 to 116; it reads PPANASRSGPPPSSGMSGR. An RRM 1 domain is found at 304 to 379; the sequence is LYVSVHGMPF…RYVEVSPATE (76 aa). Residues Ser-352 and Ser-375 each carry the phosphoserine modification. Composition is skewed to polar residues over residues 392–401 and 408–417; these read KQNMGPSGQT and LPRSKSPSGQ. The tract at residues 392 to 424 is disordered; sequence KQNMGPSGQTHPPPQTLPRSKSPSGQKRSRSRS. Residues Ser-420, Ser-422, and Ser-424 each carry the phosphoserine modification. The region spanning 430 to 507 is the RRM 2 domain; that stretch reads FCVYLKGLPF…RFIQVHPITK (78 aa). Ser-525 carries the post-translational modification Phosphoserine. A compositionally biased stretch (low complexity) spans 717-734; it reads NGPPFNFPGNFGGSNAFG. A disordered region spans residues 717–855; that stretch reads NGPPFNFPGN…PGFASSSGKP (139 aa). Over residues 783–811 the composition is skewed to gly residues; sequence SGFGGGPQNFGNGPGSLGGPPGFGSGPPG. The span at 824 to 838 shows a compositional bias: pro residues; it reads AFGPGPGPGPGPGPG. Residues 856 to 932 enclose the RRM 3 domain; that stretch reads GPTVIKVQNM…PIGSRKVNLY (77 aa).

The protein localises to the nucleus. This is RNA-binding protein 12 (RBM12) from Pongo abelii (Sumatran orangutan).